We begin with the raw amino-acid sequence, 336 residues long: Inositol 2-dehydrogenase (336 aa).

It belongs to the Gfo/Idh/MocA family. In terms of assembly, homotetramer.

It catalyses the reaction myo-inositol + NAD(+) = scyllo-inosose + NADH + H(+). In terms of biological role, involved in the oxidation of myo-inositol (MI) to 2-keto-myo-inositol (2KMI or 2-inosose). This Acidiphilium cryptum (strain JF-5) protein is Inositol 2-dehydrogenase.